The sequence spans 458 residues: tRNA modification GTPase MnmE (458 aa).

(6S)-5-formyl-5,6,7,8-tetrahydrofolate-binding residues include arginine 26, glutamate 88, and arginine 127. The TrmE-type G domain maps to 224–378 (GLSTAIIGRP…IEERINDIFF (155 aa)). Asparagine 234 is a K(+) binding site. GTP is bound by residues 234–239 (NVGKSS), 253–259 (TDIEGTT), and 278–281 (DTAG). Serine 238 is a binding site for Mg(2+). K(+) contacts are provided by threonine 253, isoleucine 255, and threonine 258. Threonine 259 serves as a coordination point for Mg(2+). (6S)-5-formyl-5,6,7,8-tetrahydrofolate is bound at residue lysine 458.

Belongs to the TRAFAC class TrmE-Era-EngA-EngB-Septin-like GTPase superfamily. TrmE GTPase family. In terms of assembly, homodimer. Heterotetramer of two MnmE and two MnmG subunits. K(+) is required as a cofactor.

The protein resides in the cytoplasm. Its function is as follows. Exhibits a very high intrinsic GTPase hydrolysis rate. Involved in the addition of a carboxymethylaminomethyl (cmnm) group at the wobble position (U34) of certain tRNAs, forming tRNA-cmnm(5)s(2)U34. This chain is tRNA modification GTPase MnmE, found in Streptococcus agalactiae serotype III (strain NEM316).